Here is a 214-residue protein sequence, read N- to C-terminus: Small ribosomal subunit protein uS5 (214 aa).

The region spanning 54–117 is the S5 DRBM domain; that stretch reads LKYEVVDIKV…RDAKMNILPV (64 aa).

Belongs to the universal ribosomal protein uS5 family. In terms of assembly, part of the 30S ribosomal subunit. Contacts protein S4.

With S4 and S12 plays an important role in translational accuracy. This is Small ribosomal subunit protein uS5 from Saccharolobus islandicus (strain Y.N.15.51 / Yellowstone #2) (Sulfolobus islandicus).